Reading from the N-terminus, the 611-residue chain is Creatine transporter (611 aa).

Residues 45 to 65 (FIMSCVGFAVGLGNVWRFPYL) form a helical membrane-spanning segment. Residues 66-71 (CYKNGG) lie on the Extracellular side of the membrane. A helical transmembrane segment spans residues 72-92 (GVFLIPYLLVAVFGGIPIFFL). The Cytoplasmic portion of the chain corresponds to 93–122 (EISLGQFMKAGGINAWNIAPLFKGLGYASM). A helical transmembrane segment spans residues 123 to 143 (VIVFFCNTYYILVLTWSSFYL). The Extracellular segment spans residues 144–207 (VQSFSSPLPW…LSSGLGDVGE (64 aa)). Residues asparagine 157 and asparagine 171 are each glycosylated (N-linked (GlcNAc...) asparagine). Residues 208–228 (IGWELTLCLTATWMLVYFCIW) form a helical membrane-spanning segment. Over 229–246 (KGVKTSGKVVYVTATFPY) the chain is Cytoplasmic. The helical transmembrane segment at 247–267 (IILVILLVRGVTLHGAVQGIV) threads the bilayer. Topologically, residues 268 to 281 (YYLQPDWGKLGEAQ) are extracellular. A helical transmembrane segment spans residues 282-302 (VWIDAGTQIFFSYAIGLGTLT). The Cytoplasmic segment spans residues 303-318 (ALGSYNQLHNDCYKDA). Residues 319 to 339 (FILSLVNSATSFFAGLVVFSI) form a helical membrane-spanning segment. At 340 to 371 (LGFMAVEEGVDISVVAESGPGLAFIAYPKAVT) the chain is on the extracellular side. The helical transmembrane segment at 372–392 (LMPFPQVWAVLFFIMLLCLGL) threads the bilayer. Over 393-421 (GSQFVGVEGFVTAILDLWPSKFSFRYLRE) the chain is Cytoplasmic. The helical transmembrane segment at 422-442 (VVVAMVICLSFLIDLSMITEG) threads the bilayer. At 443–456 (GMYIFQIFDYYSAS) the chain is on the extracellular side. The helical transmembrane segment at 457-477 (GTTLLWTAFWECVAVAWVYGG) threads the bilayer. Residues 478-497 (DRYLDDLAWMLGYRPWALVK) are Cytoplasmic-facing. A helical membrane pass occupies residues 498–518 (WCWSVITPLVCMGIFTFHLVN). The Extracellular segment spans residues 519-537 (YKPLTYNKTYTYPWWGEAI). An N-linked (GlcNAc...) asparagine glycan is attached at asparagine 525. A helical membrane pass occupies residues 538 to 558 (GWCLALASMLCVPTTVLYSLS). At 559–611 (RGRGSLKERWRKLTTPVWASHHLAYKMAGAKINQPCEGVVSCEEKVVIFESVL) the chain is on the cytoplasmic side.

Belongs to the sodium:neurotransmitter symporter (SNF) (TC 2.A.22) family.

The protein resides in the membrane. Required for the uptake of creatine. The sequence is that of Creatine transporter from Torpedo marmorata (Marbled electric ray).